Reading from the N-terminus, the 1310-residue chain is Major viral transcription factor ICP4 homolog (1310 aa).

Disordered stretches follow at residues 117–271 (AGAR…GPVE), 285–454 (GAKA…TPII), and 636–697 (GSSP…LLDK). Residues 341-350 (PVEKKPKSRE) show a composition bias toward basic and acidic residues. 3 stretches are compositionally biased toward low complexity: residues 351-364 (FVSS…WGSS), 392-407 (PSPS…DGGS), and 648-666 (PSPT…SAAA). Positions 677 to 685 (RLRTPRKRK) match the Nuclear localization signal motif. A phosphoserine; by viral VZV ORF66 mark is found at Ser-686 and Ser-722. 2 disordered regions span residues 1193-1258 (GTRF…SFGV) and 1282-1310 (ELLS…QSRG). The segment covering 1217 to 1227 (RTADDREHALE) has biased composition (basic and acidic residues). The span at 1228–1250 (LDDWEVGCEDAWDSEEGGGDDGD) shows a compositional bias: acidic residues.

It belongs to the herpesviridae ICP4 family. In terms of assembly, interacts with IE4 and IE63. Interacts with host USF1 and SP1. Post-translationally, phosphorylated by ORF66 protein kinase on Ser-686 and Ser-722. Also phosphorylated by ORF47 protein kinase and by human CSNK2A1/CKII.

The protein localises to the host nucleus. It localises to the host cytoplasm. Its subcellular location is the virion tegument. Transcriptional transactivator. May interact with and recruit specific components of the general transcription machinery to viral promoters and stabilize their formation for transcription initiation. Negatively regulates its own transcription. This immediate early (EI) protein may be necessary in virion for viral pathogenesis. In Homo sapiens (Human), this protein is Major viral transcription factor ICP4 homolog.